We begin with the raw amino-acid sequence, 76 residues long: Precursor of CEP7 (76 aa).

Positions 1–27 (MAKCTLTSLILLLIVLVLIQESHIVEG) are cleaved as a signal peptide. Positions 28–61 (RPLKSSRISNVSKKFAAGNSNLSSKLTTEDHSLD) are excised as a propeptide. 2 N-linked (GlcNAc...) asparagine glycosylation sites follow: Asn37 and Asn48. A disordered region spans residues 49–76 (LSSKLTTEDHSLDAFRPTNPGNSPGIGH). A hydroxyproline mark is found at Pro65, Pro68, and Pro72.

This sequence belongs to the C-terminally encoded plant signaling peptide (CEP) family. As to quaternary structure, interacts with CEP receptors (e.g. CEPR1 and CEPR2). In terms of processing, the mature small signaling peptide is generated by proteolytic processing of the longer precursor.

Its subcellular location is the secreted. It localises to the extracellular space. It is found in the apoplast. In terms of biological role, extracellular signaling peptide that may regulate primary root growth rate and systemic nitrogen (N)-demand signaling. Mediates up-regulation of genes involved in N uptake and assimilation pathways. This chain is Precursor of CEP7, found in Arabidopsis thaliana (Mouse-ear cress).